The chain runs to 319 residues: GATA transcription factor 18 (319 aa).

The span at 1-15 shows a compositional bias: low complexity; that stretch reads MPDAAAAAAAAQDAD. The disordered stretch occupies residues 1–74; sequence MPDAAAAAAA…AAPEPVSALL (74 aa). The span at 32–60 shows a compositional bias: acidic residues; sequence NNDDDGDDGTEEDEEEDDDEEGDEEELPP. One can recognise a Tify domain in the interval 74–109; sequence LPGSPNQLTLLFQGEVYVFESVTPEKVQAVLLLLGS. In terms of domain architecture, CCT spans 143 to 185; it reads RVASLIRFREKRKERNFDKKIRYAVRKEVALRMQRRKGQFAGR. Residues 215-242 form a GATA-type zinc finger; the sequence is CQNCGTSEKMTPAMRRGPAGPRTLCNAC. A disordered region spans residues 292 to 319; that stretch reads ITASHGEVMGDSTPANEAEIGAPKAQSQ.

The protein belongs to the type IV zinc-finger family. Class C subfamily.

The protein localises to the nucleus. Its function is as follows. Transcriptional activator that specifically binds 5'-GATA-3' or 5'-GAT-3' motifs within gene promoters. The polypeptide is GATA transcription factor 18 (Oryza sativa subsp. indica (Rice)).